We begin with the raw amino-acid sequence, 394 residues long: NAD(P)H-quinone oxidoreductase subunit H (394 aa).

Belongs to the complex I 49 kDa subunit family. As to quaternary structure, NDH-1 can be composed of about 15 different subunits; different subcomplexes with different compositions have been identified which probably have different functions.

The protein resides in the cellular thylakoid membrane. It catalyses the reaction a plastoquinone + NADH + (n+1) H(+)(in) = a plastoquinol + NAD(+) + n H(+)(out). The enzyme catalyses a plastoquinone + NADPH + (n+1) H(+)(in) = a plastoquinol + NADP(+) + n H(+)(out). Its function is as follows. NDH-1 shuttles electrons from an unknown electron donor, via FMN and iron-sulfur (Fe-S) centers, to quinones in the respiratory and/or the photosynthetic chain. The immediate electron acceptor for the enzyme in this species is believed to be plastoquinone. Couples the redox reaction to proton translocation, and thus conserves the redox energy in a proton gradient. Cyanobacterial NDH-1 also plays a role in inorganic carbon-concentration. This is NAD(P)H-quinone oxidoreductase subunit H from Prochlorococcus marinus (strain MIT 9211).